The sequence spans 318 residues: MATSTRSRKRGAEPDTEVVKRAKQNKLCSLQNNDFLGFCSLREINYYETLKLDFERNFEAPQNDADFALLVARKANFVANQVRRYPSVTDAHHNNAVHDVLILIQHARAVLMDKNKRRRYDDIVAHKNSNVLKICDTFISQLDQINVDLSAALVAFKTASSSLSGGAANDITSALVEALENWLAAQPVVMRRPSSMNRVLITWPPLLEEQVYTKFQTEQLIRQELLASASIKSEDIVNVFVCDINAVVVEFKTQEQQLAAMKIDEIKSNRFTVKPYILKNFYNAQLSRRLSDEMNAIDIRAQNIREQLKTVHARYSQS.

This is an uncharacterized protein from Orgyia pseudotsugata multicapsid polyhedrosis virus (OpMNPV).